Reading from the N-terminus, the 112-residue chain is C-X-C motif chemokine 6 (112 aa).

The N-terminal stretch at 1–36 is a signal peptide; sequence MRLLSSRAARVSGPSGSLCALLALLLLTPPGPLASA. Cystine bridges form between Cys-48/Cys-74 and Cys-50/Cys-90.

The protein belongs to the intercrine alpha (chemokine CxC) family.

It localises to the secreted. Chemotactic for neutrophil granulocytes. Signals through binding and activation of its receptors (CXCR1 and CXCR2). In addition to its chemotactic and angiogenic properties, it has strong antibacterial activity against Gram-positive and Gram-negative bacteria (90-fold-higher when compared to CXCL5 and CXCL7). The sequence is that of C-X-C motif chemokine 6 (CXCL6) from Bos taurus (Bovine).